The following is a 181-amino-acid chain: Large ribosomal subunit protein uL5 (181 aa).

This sequence belongs to the universal ribosomal protein uL5 family. In terms of assembly, part of the 50S ribosomal subunit; part of the 5S rRNA/L5/L18/L25 subcomplex. Contacts the 5S rRNA and the P site tRNA. Forms a bridge to the 30S subunit in the 70S ribosome.

This is one of the proteins that bind and probably mediate the attachment of the 5S RNA into the large ribosomal subunit, where it forms part of the central protuberance. In the 70S ribosome it contacts protein S13 of the 30S subunit (bridge B1b), connecting the 2 subunits; this bridge is implicated in subunit movement. Contacts the P site tRNA; the 5S rRNA and some of its associated proteins might help stabilize positioning of ribosome-bound tRNAs. The protein is Large ribosomal subunit protein uL5 of Clostridium kluyveri (strain NBRC 12016).